The chain runs to 905 residues: Catenin alpha-2 (905 aa).

Threonine 632 is modified (phosphothreonine). Residues serine 640, serine 651, and serine 853 each carry the phosphoserine modification. Over residues 869–879 the composition is skewed to basic and acidic residues; it reads VKREKPEEFQT. Positions 869 to 891 are disordered; sequence VKREKPEEFQTRVRRGSQKKHIS. Residues 880–890 show a composition bias toward basic residues; the sequence is RVRRGSQKKHI. The residue at position 891 (serine 891) is a Phosphoserine.

It belongs to the vinculin/alpha-catenin family. Interacts with CDH1 and CDH2. Interacts with ZNF639; recruits CTNNA2 to the nucleus. Interacts with F-actin.

The protein localises to the cell membrane. Its subcellular location is the cytoplasm. It localises to the cytoskeleton. It is found in the cell junction. The protein resides in the adherens junction. The protein localises to the cell projection. Its subcellular location is the axon. It localises to the nucleus. In terms of biological role, may function as a linker between cadherin adhesion receptors and the cytoskeleton to regulate cell-cell adhesion and differentiation in the nervous system. Required for proper regulation of cortical neuronal migration and neurite growth. It acts as a negative regulator of Arp2/3 complex activity and Arp2/3-mediated actin polymerization. It thereby suppresses excessive actin branching which would impair neurite growth and stability. Regulates morphological plasticity of synapses and cerebellar and hippocampal lamination during development. Functions in the control of startle modulation. This chain is Catenin alpha-2 (CTNNA2), found in Pongo abelii (Sumatran orangutan).